A 449-amino-acid chain; its full sequence is MVLRERLSHILFHEKVGFLLLCLLWYISSAVTNTTSKSIFNELRCPVTLTFLQFGFVAFFSAVCLLFRKQFLGGTGIQKPSKYVLYTTLPLSIFQIGGHVFGSLATTKIPVSTVHTVKALSPLFTVLAYRFMFRHVYSAMTYFSLVPLTFGVTLACSFELSADIVGLLYALISTCIFVSQNIFGSKIFMEAKSHSTHTKKHYNKLNLLLYSSGVAFIVMIPVWLYQEGFAYLPEVGSPVFLNLIYNGLSHFFQNILAFTLLSIISPVAYSIASLIKRIFVIVVSIIWFQQATNFTQGSGIFLTAIGLWLYDRSKKGNLYESCKVKEFEKDALELEEQTMEDEKSYPSSGTQSPFYGKNFLPQITPRLDSVVPLISDSPMTPNSVYSNEGVTSSVSGNATPASVRQSTQNDFSNSNIHDRRSSYTFQLNNFKAPQPSRLWATETVPTLKI.

The next 9 membrane-spanning stretches (helical) occupy residues 7 to 27 (LSHI…LWYI), 47 to 67 (VTLT…CLLF), 84 to 104 (VLYT…FGSL), 109 to 129 (IPVS…VLAY), 136 to 156 (VYSA…TLAC), 164 to 184 (IVGL…NIFG), 205 to 225 (LNLL…VWLY), 255 to 275 (ILAF…ASLI), and 278 to 298 (IFVI…TQGS). S348 and S352 each carry phosphoserine. The residue at position 355 (Y355) is a Phosphotyrosine. The span at 382 to 415 (NSVYSNEGVTSSVSGNATPASVRQSTQNDFSNSN) shows a compositional bias: polar residues. The segment at 382 to 416 (NSVYSNEGVTSSVSGNATPASVRQSTQNDFSNSNI) is disordered.

It belongs to the TPT transporter family.

Its subcellular location is the membrane. This is Putative transporter C83.11 from Schizosaccharomyces pombe (strain 972 / ATCC 24843) (Fission yeast).